Here is a 442-residue protein sequence, read N- to C-terminus: Protein PRRC1-A (442 aa).

The tract at residues 1–27 (MMEESGIETTPPSTPPPSTIGTSVPAA) is disordered.

Belongs to the PRRC1 family.

The protein localises to the golgi apparatus. The sequence is that of Protein PRRC1-A (prrc1-a) from Xenopus laevis (African clawed frog).